We begin with the raw amino-acid sequence, 172 residues long: MIGSKLKEAIRSYSDFPKKGILFHDISPIFCKPDLYQELIEEMAKSEILNSSDAIISIDARGFLFGSCISLKLSKPLILARKAGKLPGPILSSTYNLEYGENSLSIQKESLNEFKNFAIIDDVLATGGTINCVKSLLTSHNKNISGACVVIELLALKAREKLDFPIYSTLTL.

Belongs to the purine/pyrimidine phosphoribosyltransferase family. In terms of assembly, homodimer.

Its subcellular location is the cytoplasm. It carries out the reaction AMP + diphosphate = 5-phospho-alpha-D-ribose 1-diphosphate + adenine. Its pathway is purine metabolism; AMP biosynthesis via salvage pathway; AMP from adenine: step 1/1. Functionally, catalyzes a salvage reaction resulting in the formation of AMP, that is energically less costly than de novo synthesis. The sequence is that of Adenine phosphoribosyltransferase from Prochlorococcus marinus (strain SARG / CCMP1375 / SS120).